The chain runs to 126 residues: MARIAGVDLPREKRVEIALTYIYGIGLTRAKEVLARTGVNPDTRVKNLSETEQSALREAIEKTYKVEGDLRSEVGQNIKRLMDIGAYRGLRHRRGLPVRGQRTKTNARTRKGPRKTVAGKKKATRK.

Residues 92-126 (HRRGLPVRGQRTKTNARTRKGPRKTVAGKKKATRK) form a disordered region.

This sequence belongs to the universal ribosomal protein uS13 family. Part of the 30S ribosomal subunit. Forms a loose heterodimer with protein S19. Forms two bridges to the 50S subunit in the 70S ribosome.

Located at the top of the head of the 30S subunit, it contacts several helices of the 16S rRNA. In the 70S ribosome it contacts the 23S rRNA (bridge B1a) and protein L5 of the 50S subunit (bridge B1b), connecting the 2 subunits; these bridges are implicated in subunit movement. Contacts the tRNAs in the A and P-sites. The polypeptide is Small ribosomal subunit protein uS13 (Deinococcus geothermalis (strain DSM 11300 / CIP 105573 / AG-3a)).